A 315-amino-acid chain; its full sequence is Porphobilinogen deaminase (315 aa).

Position 242 is an S-(dipyrrolylmethanemethyl)cysteine (Cys-242).

It belongs to the HMBS family. In terms of assembly, monomer. The cofactor is dipyrromethane.

It catalyses the reaction 4 porphobilinogen + H2O = hydroxymethylbilane + 4 NH4(+). Its pathway is porphyrin-containing compound metabolism; protoporphyrin-IX biosynthesis; coproporphyrinogen-III from 5-aminolevulinate: step 2/4. Functionally, tetrapolymerization of the monopyrrole PBG into the hydroxymethylbilane pre-uroporphyrinogen in several discrete steps. The polypeptide is Porphobilinogen deaminase (Syntrophotalea carbinolica (strain DSM 2380 / NBRC 103641 / GraBd1) (Pelobacter carbinolicus)).